Consider the following 95-residue polypeptide: L-amino-acid oxidase (95 aa).

This sequence belongs to the flavin monoamine oxidase family. FIG1 subfamily. As to quaternary structure, homodimer; non-covalently linked. It depends on FAD as a cofactor. In terms of processing, N-glycosylated. As to expression, expressed by the venom gland.

The protein localises to the secreted. It catalyses the reaction an L-alpha-amino acid + O2 + H2O = a 2-oxocarboxylate + H2O2 + NH4(+). The enzyme catalyses L-leucine + O2 + H2O = 4-methyl-2-oxopentanoate + H2O2 + NH4(+). The catalysed reaction is L-phenylalanine + O2 + H2O = 3-phenylpyruvate + H2O2 + NH4(+). It carries out the reaction L-tryptophan + O2 + H2O = indole-3-pyruvate + H2O2 + NH4(+). It catalyses the reaction L-methionine + O2 + H2O = 4-methylsulfanyl-2-oxobutanoate + H2O2 + NH4(+). The enzyme catalyses L-arginine + O2 + H2O = 5-guanidino-2-oxopentanoate + H2O2 + NH4(+). Functionally, catalyzes an oxidative deamination of predominantly hydrophobic and aromatic L-amino acids, thus producing hydrogen peroxide that may contribute to the diverse toxic effects of this enzyme. Is highly active on L-Met, L-Leu, L-Phe, L-Trp, and L-Arg, and no weakly or no active on L-His, L-Tyr, L-Ile, L-Gln, and L-Lys. Exhibits diverse biological activities, such as antibacterial activity against both Gram-positive (B.subtilis) and Gram-negative (E.coli) bacteria, and inhibition of ADP- or collagen-induced platelet aggregation. Effects of snake L-amino oxidases on platelets are controversial, since they either induce aggregation or inhibit agonist-induced aggregation. These different effects are probably due to different experimental conditions. This protein may also induce hemorrhage, hemolysis, edema, apoptosis, and have antiparasitic activities. In Naja oxiana (Central Asian cobra), this protein is L-amino-acid oxidase.